The following is a 672-amino-acid chain: Nuclear RNA export factor 1 (672 aa).

Disordered stretches follow at residues 1-52 and 73-101; these read MPKR…SFKP and DEDD…IPRG. Positions 40 to 49 are enriched in basic residues; it reads RKDRNKRRVS. The RRM domain occupies 113–193; that stretch reads WYQVTLQNAQ…PRVRSGIPLV (81 aa). 4 LRR repeats span residues 255–280, 281–304, 305–332, and 333–360; these read DLEA…KRLP, NLKI…LRNL, SILE…EVRR, and KFPK…GRLL. In terms of domain architecture, NTF2 spans 375–529; sequence VVRQFLDQYF…FCIRNETIFI (155 aa). The tract at residues 541–564 is disordered; the sequence is KRSQHQPAPGAMPSTSSAVTSPQA. Positions 553–563 are enriched in polar residues; it reads PSTSSAVTSPQ. The residue at position 561 (Ser561) is a Phosphoserine. In terms of domain architecture, TAP-C spans 618–672; the sequence is STKMQMIEAMSAQSQMNVIWSRKCLEETNWDFNHAAFVFEKLFKENKIPPEAFMK.

It belongs to the NXF family. In terms of assembly, interacts with Nxt1. Interacts with ZC3H3. Forms a complex with Nup358/RanBP2, RanGAP and Nxt1. Interacts with Nup54 and Nup58. Interacts with Orc3 and Hpr1. As to expression, expressed ubiquitously.

Its subcellular location is the nucleus. It localises to the nucleoplasm. The protein localises to the cytoplasm. The protein resides in the nucleus envelope. In terms of biological role, mediates the export of the majority of mRNAs from the nucleus to the cytoplasm. In ovarian follicle cells, plays a role in transposable element silencing regulation by enabling the nuclear export of flamenco (flam) transcripts and subsequent piRNA biogenesis. The polypeptide is Nuclear RNA export factor 1 (Drosophila melanogaster (Fruit fly)).